We begin with the raw amino-acid sequence, 462 residues long: Fasciclin-like arabinogalactan protein 18 (462 aa).

The signal sequence occupies residues 1 to 25 (MDRCIYGCSVITIFFSFFFLLNASA). 3 N-linked (GlcNAc...) asparagine glycosylation sites follow: Asn-32, Asn-77, and Asn-293. 2 consecutive FAS1 domains span residues 40-185 (NSNS…ERLL) and 271-414 (VKDF…DGVL).

It belongs to the fasciclin-like AGP family.

The protein resides in the secreted. In terms of biological role, may be a cell surface adhesion protein. In Arabidopsis thaliana (Mouse-ear cress), this protein is Fasciclin-like arabinogalactan protein 18 (FLA18).